A 414-amino-acid chain; its full sequence is Sarcosine oxidase subunit beta (414 aa).

FAD is bound by residues glycine 42, histidine 43, glutamate 64, asparagine 72, threonine 77, and isoleucine 79. A Tele-8alpha-FMN histidine modification is found at histidine 183. FAD-binding residues include valine 207, glycine 364, glycine 367, and lysine 369.

The protein belongs to the SoxB family. As to quaternary structure, heterotetramer composed of subunits alpha (SoxA), beta (SoxB), gamma (SoxG) and delta (SoxD). Requires FAD as cofactor. FMN is required as a cofactor.

It localises to the cytoplasm. It carries out the reaction sarcosine + (6S)-5,6,7,8-tetrahydrofolate + O2 = (6R)-5,10-methylene-5,6,7,8-tetrahydrofolate + glycine + H2O2. The catalysed reaction is sarcosine + O2 + H2O = formaldehyde + glycine + H2O2. In the presence of tetrahydrofolate, catalyzes the oxidative demethylation of sarcosine to yield glycine, 5,10-methylenetetrahydrofolate and hydrogen peroxide. In the absence of tetrahydrofolate, catalyzes the oxidative demethylation of sarcosine to yield glycine, formaldehyde and hydrogen peroxide. The chain is Sarcosine oxidase subunit beta (soxB) from Rhodobacter capsulatus (strain ATCC BAA-309 / NBRC 16581 / SB1003).